A 181-amino-acid polypeptide reads, in one-letter code: Monofunctional chorismate mutase (181 aa).

Residues 1–20 form the signal peptide; the sequence is MIRHIAIFLCSLLMCSTTFA. The 82-residue stretch at 21–102 folds into the Chorismate mutase domain; it reads DSVTSVSLGA…ASKAIQYRYL (82 aa). Residues R38, K49, D58, E62, and Q98 each contribute to the substrate site.

It localises to the periplasm. The enzyme catalyses chorismate = prephenate. It functions in the pathway metabolic intermediate biosynthesis; prephenate biosynthesis; prephenate from chorismate: step 1/1. In terms of biological role, catalyzes the Claisen rearrangement of chorismate to prephenate. The protein is Monofunctional chorismate mutase of Salmonella typhimurium.